The chain runs to 326 residues: Adenosine receptor A1 (326 aa).

At 1–10 (MPPAISAFQA) the chain is on the extracellular side. A helical membrane pass occupies residues 11–33 (AYIGIEVLIALVSVPGNVLVIWA). The Cytoplasmic portion of the chain corresponds to 34–46 (VKVNQALRDATFC). Residues 47 to 69 (FIVSLAVADVAVGALVIPLAILI) form a helical membrane-spanning segment. Topologically, residues 70–80 (NIGPRTYFHTC) are extracellular. An intrachain disulfide couples C80 to C169. Residues 81–102 (LMVACPVLILTQSSILALLAIA) traverse the membrane as a helical segment. Residues 103 to 123 (VDRYLRVKIPLRYKTVVTPRR) are Cytoplasmic-facing. A helical membrane pass occupies residues 124-146 (AAVAIAGCWILSFVVGLTPLFGW). Topologically, residues 147–176 (NRLGEAQRAWAANGSGGEPVIKCEFEKVIS) are extracellular. N-linked (GlcNAc...) asparagine glycosylation occurs at N159. Residues 177–201 (MEYMVYFNFFVWVLPPLLLMVLIYL) form a helical membrane-spanning segment. Residues 202 to 235 (EVFYLIRRQLGKKVSASSGDPQKYYGKELKIAKS) lie on the Cytoplasmic side of the membrane. The chain crosses the membrane as a helical span at residues 236-259 (LALILFLFALSWLPLHILNCITLF). Topologically, residues 260 to 267 (CPSCRKPS) are extracellular. The chain crosses the membrane as a helical span at residues 268-292 (ILMYIAIFLTHGNSAMNPIVYAFRI). Over 293–326 (QKFRVTFLKIWNDHFRCQPTPPVDEDPPEEAPHD) the chain is Cytoplasmic. C309 is lipidated: S-palmitoyl cysteine.

This sequence belongs to the G-protein coupled receptor 1 family.

The protein localises to the cell membrane. Functionally, receptor for adenosine. The activity of this receptor is mediated by G proteins which inhibit adenylyl cyclase. The chain is Adenosine receptor A1 (ADORA1) from Canis lupus familiaris (Dog).